Reading from the N-terminus, the 707-residue chain is Translation initiation factor IF-2 (707 aa).

Positions 55–80 (LAEKPKEEKQKDQKNHEQEAQDKEEK) are enriched in basic and acidic residues. The segment at 55–88 (LAEKPKEEKQKDQKNHEQEAQDKEEKEIEEDSFY) is disordered. The tr-type G domain occupies 209-378 (PRPPIVTVMG…LLVAEMEDLK (170 aa)). The G1 stretch occupies residues 218–225 (GHVDHGKT). A GTP-binding site is contributed by 218–225 (GHVDHGKT). The segment at 243–247 (GITQH) is G2. The G3 stretch occupies residues 264–267 (DTPG). GTP is bound by residues 264 to 268 (DTPGH) and 318 to 321 (NKID). The G4 stretch occupies residues 318-321 (NKID). Positions 354-356 (SAK) are G5.

Belongs to the TRAFAC class translation factor GTPase superfamily. Classic translation factor GTPase family. IF-2 subfamily.

Its subcellular location is the cytoplasm. Its function is as follows. One of the essential components for the initiation of protein synthesis. Protects formylmethionyl-tRNA from spontaneous hydrolysis and promotes its binding to the 30S ribosomal subunits. Also involved in the hydrolysis of GTP during the formation of the 70S ribosomal complex. The sequence is that of Translation initiation factor IF-2 from Caldanaerobacter subterraneus subsp. tengcongensis (strain DSM 15242 / JCM 11007 / NBRC 100824 / MB4) (Thermoanaerobacter tengcongensis).